An 88-amino-acid chain; its full sequence is Arminin 1b (88 aa).

The first 18 residues, 1-18 (MKTVLAFLFLTFIAFTHA), serve as a signal peptide directing secretion. Residues 19 to 57 (ESYEDVKEEIKNEVEREIFEDLEEESDVLESNVRELNDA) constitute a propeptide that is removed on maturation. Valine amide is present on valine 85.

It belongs to the arminin family. Expressed in entodermal epithelium along the body column.

The protein resides in the secreted. Its subcellular location is the target cell membrane. Antimicrobial peptide with a broad-spectrum antimicrobial activity. Keeps its antibacterial activity under a wide range of salt concentrations that mimic physiological conditions of human blood, which is surprising, since Hydra is an obligate freshwater animal with nearly no salt tolerance. Does not affect red blood cells. The chain is Arminin 1b from Hydra vulgaris (Hydra).